Reading from the N-terminus, the 77-residue chain is Conotoxin ArMKLT2-0322 (77 aa).

The first 22 residues, 1–22, serve as a signal peptide directing secretion; the sequence is MKLTCVLIIAVLFLIVCQLNTA. Positions 23 to 47 are excised as a propeptide; that stretch reads DDSRDKQEYRAVRLRDAIRNSRGSR. Intrachain disulfides connect Cys-49–Cys-62, Cys-56–Cys-67, and Cys-61–Cys-74.

The protein belongs to the conotoxin O1 superfamily. In terms of tissue distribution, expressed by the venom duct.

It localises to the secreted. In Conus arenatus (Sand-dusted cone), this protein is Conotoxin ArMKLT2-0322.